The sequence spans 387 residues: Succinate--CoA ligase [ADP-forming] subunit beta (387 aa).

The 235-residue stretch at 9–243 folds into the ATP-grasp domain; it reads KEILSTYGIP…YSQLDPLEIT (235 aa). ATP is bound by residues K45, 52-54, E98, V101, and E106; that span reads GRG. The Mg(2+) site is built by N198 and D212. Residues N263 and 320-322 each bind substrate; that span reads GIM.

Belongs to the succinate/malate CoA ligase beta subunit family. In terms of assembly, heterotetramer of two alpha and two beta subunits. Mg(2+) is required as a cofactor.

It carries out the reaction succinate + ATP + CoA = succinyl-CoA + ADP + phosphate. The enzyme catalyses GTP + succinate + CoA = succinyl-CoA + GDP + phosphate. The protein operates within carbohydrate metabolism; tricarboxylic acid cycle; succinate from succinyl-CoA (ligase route): step 1/1. Functionally, succinyl-CoA synthetase functions in the citric acid cycle (TCA), coupling the hydrolysis of succinyl-CoA to the synthesis of either ATP or GTP and thus represents the only step of substrate-level phosphorylation in the TCA. The beta subunit provides nucleotide specificity of the enzyme and binds the substrate succinate, while the binding sites for coenzyme A and phosphate are found in the alpha subunit. This Trichlorobacter lovleyi (strain ATCC BAA-1151 / DSM 17278 / SZ) (Geobacter lovleyi) protein is Succinate--CoA ligase [ADP-forming] subunit beta.